The following is a 100-amino-acid chain: uncharacterized protein (100 aa).

This is an uncharacterized protein from Saccharomyces cerevisiae (strain ATCC 204508 / S288c) (Baker's yeast).